The primary structure comprises 108 residues: uncharacterized protein (108 aa).

The segment at 1 to 108 (MAKVTSEPQK…DKEQSETSVL (108 aa)) is disordered. Residues 26–56 (KGRKKGKTPRQRRSRSGVKGLKTTRKAKRPL) show a composition bias toward basic residues. The segment covering 58–70 (GSSSQKAGETNTP) has biased composition (polar residues). Residues 73 to 92 (KPKKARGPILRGRYHRLKEK) are compositionally biased toward basic residues. Over residues 93-108 (MKKEEADKEQSETSVL) the composition is skewed to basic and acidic residues.

This is an uncharacterized protein from Homo sapiens (Human).